The following is a 199-amino-acid chain: Large ribosomal subunit protein uL4 (199 aa).

The protein belongs to the universal ribosomal protein uL4 family. As to quaternary structure, part of the 50S ribosomal subunit.

Functionally, one of the primary rRNA binding proteins, this protein initially binds near the 5'-end of the 23S rRNA. It is important during the early stages of 50S assembly. It makes multiple contacts with different domains of the 23S rRNA in the assembled 50S subunit and ribosome. Forms part of the polypeptide exit tunnel. The polypeptide is Large ribosomal subunit protein uL4 (Aquifex pyrophilus).